Reading from the N-terminus, the 54-residue chain is Glutathione S-transferase 6.7 (54 aa).

This sequence belongs to the GST superfamily. Theta family. As to quaternary structure, homodimer. Post-translationally, the N-terminus is blocked.

It localises to the cytoplasm. It catalyses the reaction RX + glutathione = an S-substituted glutathione + a halide anion + H(+). Conjugation of reduced glutathione to a wide number of exogenous and endogenous hydrophobic electrophiles. This chain is Glutathione S-transferase 6.7, found in Dicentrarchus labrax (European seabass).